The following is a 104-amino-acid chain: Large ribosomal subunit protein bL21 (104 aa).

Belongs to the bacterial ribosomal protein bL21 family. Part of the 50S ribosomal subunit. Contacts protein L20.

Functionally, this protein binds to 23S rRNA in the presence of protein L20. The protein is Large ribosomal subunit protein bL21 of Streptococcus gordonii (strain Challis / ATCC 35105 / BCRC 15272 / CH1 / DL1 / V288).